Here is a 777-residue protein sequence, read N- to C-terminus: Subtilisin-like protease SBT3.7 (777 aa).

The first 22 residues, 1–22 (MRNHRTSIFVVLSLVIILNGQS), serve as a signal peptide directing secretion. A propeptide spans 23–113 (GFLPRAGAES…VIPDRFYKPA (91 aa)) (activation peptide). Residues 34 to 111 (VHIVYLGEKQ…VHVIPDRFYK (78 aa)) enclose the Inhibitor I9 domain. The Peptidase S8 domain maps to 117–624 (TWDYLGLSPT…GGLVNPEKAT (508 aa)). N-linked (GlcNAc...) asparagine glycosylation occurs at asparagine 133. The active-site Charge relay system is aspartate 147. Asparagine 180 and asparagine 206 each carry an N-linked (GlcNAc...) asparagine glycan. The Charge relay system role is filled by histidine 222. Asparagine 237, asparagine 397, asparagine 412, and asparagine 540 each carry an N-linked (GlcNAc...) asparagine glycan. Residues 386 to 481 (SLVYPENPGN…ELGTYILFYI (96 aa)) enclose the PA domain. Serine 555 serves as the catalytic Charge relay system. N-linked (GlcNAc...) asparagine glycosylation is found at asparagine 647, asparagine 723, and asparagine 758.

It belongs to the peptidase S8 family.

The protein resides in the secreted. This chain is Subtilisin-like protease SBT3.7, found in Arabidopsis thaliana (Mouse-ear cress).